The sequence spans 1305 residues: RNA-directed RNA polymerase (1305 aa).

Positions 563 to 814 (IIVGDLEATG…KTLIAPFSVE (252 aa)) constitute a RdRp catalytic domain.

It belongs to the reoviridae RNA-directed RNA polymerase family.

The enzyme catalyses RNA(n) + a ribonucleoside 5'-triphosphate = RNA(n+1) + diphosphate. The chain is RNA-directed RNA polymerase (Segment-1) from African horse sickness virus (AHSV).